A 383-amino-acid polypeptide reads, in one-letter code: Lipid-A-disaccharide synthase (383 aa).

It belongs to the LpxB family.

It catalyses the reaction a lipid X + a UDP-2-N,3-O-bis[(3R)-3-hydroxyacyl]-alpha-D-glucosamine = a lipid A disaccharide + UDP + H(+). It functions in the pathway bacterial outer membrane biogenesis; LPS lipid A biosynthesis. Condensation of UDP-2,3-diacylglucosamine and 2,3-diacylglucosamine-1-phosphate to form lipid A disaccharide, a precursor of lipid A, a phosphorylated glycolipid that anchors the lipopolysaccharide to the outer membrane of the cell. This Anaeromyxobacter sp. (strain K) protein is Lipid-A-disaccharide synthase.